A 134-amino-acid chain; its full sequence is Early E3B 14.5 kDa protein (134 aa).

An N-terminal signal peptide occupies residues Met1–Thr21. A helical membrane pass occupies residues Tyr54 to Phe78.

Belongs to the adenoviridae E3_14 family. Post-translationally, phosphorylated on serine; O-glycosylated, but not N-glycosylated.

It is found in the host membrane. Functionally, down-regulates the EGF receptor and prevents cytolysis by TNF. The sequence is that of Early E3B 14.5 kDa protein from Homo sapiens (Human).